The sequence spans 225 residues: Flagellar transcriptional regulator FlhC (225 aa).

Residues cysteine 149, cysteine 152, cysteine 169, and cysteine 172 each contribute to the Zn(2+) site.

Belongs to the FlhC family. Heterohexamer composed of two FlhC and four FlhD subunits. Each FlhC binds a FlhD dimer, forming a heterotrimer, and a hexamer assembles by dimerization of two heterotrimers. It depends on Zn(2+) as a cofactor.

Its subcellular location is the cytoplasm. Its function is as follows. Functions in complex with FlhD as a master transcriptional regulator that regulates transcription of several flagellar and non-flagellar operons by binding to their promoter region. Activates expression of class 2 flagellar genes, including fliA, which is a flagellum-specific sigma factor that turns on the class 3 genes. Also regulates genes whose products function in a variety of physiological pathways. This chain is Flagellar transcriptional regulator FlhC, found in Burkholderia lata (strain ATCC 17760 / DSM 23089 / LMG 22485 / NCIMB 9086 / R18194 / 383).